The sequence spans 101 residues: MILEHVLVLSAYLFLIGLYGLITSRNMVRALMCLELILNAVNMNFVTFSDFFDNSELKGDIFCIFVIAIAAAEAAIGLAIVSSIYRNRKSTRINQSTLLNK.

3 consecutive transmembrane segments (helical) span residues 2-22 (ILEHVLVLSAYLFLIGLYGLI), 32-52 (MCLELILNAVNMNFVTFSDFF), and 61-81 (IFCIFVIAIAAAEAAIGLAIV).

It belongs to the complex I subunit 4L family. As to quaternary structure, NDH is composed of at least 16 different subunits, 5 of which are encoded in the nucleus.

The protein localises to the plastid. The protein resides in the chloroplast thylakoid membrane. It catalyses the reaction a plastoquinone + NADH + (n+1) H(+)(in) = a plastoquinol + NAD(+) + n H(+)(out). The enzyme catalyses a plastoquinone + NADPH + (n+1) H(+)(in) = a plastoquinol + NADP(+) + n H(+)(out). In terms of biological role, NDH shuttles electrons from NAD(P)H:plastoquinone, via FMN and iron-sulfur (Fe-S) centers, to quinones in the photosynthetic chain and possibly in a chloroplast respiratory chain. The immediate electron acceptor for the enzyme in this species is believed to be plastoquinone. Couples the redox reaction to proton translocation, and thus conserves the redox energy in a proton gradient. This Crucihimalaya wallichii (Rock-cress) protein is NAD(P)H-quinone oxidoreductase subunit 4L, chloroplastic.